Consider the following 513-residue polypeptide: GMP synthase [glutamine-hydrolyzing] (513 aa).

Residues 5–195 enclose the Glutamine amidotransferase type-1 domain; sequence LVLVIDFGGQ…VYNICGCTGD (191 aa). Catalysis depends on Cys-82, which acts as the Nucleophile. Catalysis depends on residues His-169 and Glu-171. The GMPS ATP-PPase domain occupies 196-388; the sequence is WKMDSFVEKT…LGIPEKLVFR (193 aa). 223–229 is a binding site for ATP; sequence SGGVDSS.

Homodimer.

The enzyme catalyses XMP + L-glutamine + ATP + H2O = GMP + L-glutamate + AMP + diphosphate + 2 H(+). It participates in purine metabolism; GMP biosynthesis; GMP from XMP (L-Gln route): step 1/1. Its function is as follows. Catalyzes the synthesis of GMP from XMP. This chain is GMP synthase [glutamine-hydrolyzing], found in Clostridium botulinum (strain Alaska E43 / Type E3).